A 930-amino-acid chain; its full sequence is Translation initiation factor IF-2 (930 aa).

Residues 29–316 (GEFVKSASST…GRKSKRAKRA (288 aa)) are disordered. The span at 81-120 (RPGPKPGPPVAQQPAAPAAPPAAPPAPPTPAAAPPSPAPA) shows a compositional bias: pro residues. Over residues 121-135 (APAAATPAEPAAPSA) the composition is skewed to low complexity. 2 stretches are compositionally biased toward pro residues: residues 136–155 (RPGP…PGAP) and 180–191 (PRPQGPGGPRPG). The segment covering 192-204 (PGAGGPRPGGGPR) has biased composition (gly residues). Pro residues predominate over residues 228–240 (GGGPRPGGGPRPT). Residues 241-301 (PGGAGRPGGG…GAAGAFGRPG (61 aa)) show a composition bias toward gly residues. Basic residues predominate over residues 305-314 (KRGRKSKRAK). The region spanning 426 to 598 (IRPPVVTVMG…VILTADASLD (173 aa)) is the tr-type G domain. The segment at 435–442 (GHVDHGKT) is G1. GTP is bound at residue 435–442 (GHVDHGKT). The segment at 460–464 (GITQH) is G2. Residues 485–488 (DTPG) are G3. GTP-binding positions include 485 to 489 (DTPGH) and 539 to 542 (NKID). A G4 region spans residues 539 to 542 (NKID). The segment at 575-577 (SAK) is G5.

It belongs to the TRAFAC class translation factor GTPase superfamily. Classic translation factor GTPase family. IF-2 subfamily.

It localises to the cytoplasm. Functionally, one of the essential components for the initiation of protein synthesis. Protects formylmethionyl-tRNA from spontaneous hydrolysis and promotes its binding to the 30S ribosomal subunits. Also involved in the hydrolysis of GTP during the formation of the 70S ribosomal complex. The chain is Translation initiation factor IF-2 from Mycolicibacterium vanbaalenii (strain DSM 7251 / JCM 13017 / BCRC 16820 / KCTC 9966 / NRRL B-24157 / PYR-1) (Mycobacterium vanbaalenii).